A 469-amino-acid chain; its full sequence is 3-isopropylmalate dehydratase large subunit (469 aa).

Positions 346, 406, and 409 each coordinate [4Fe-4S] cluster.

The protein belongs to the aconitase/IPM isomerase family. LeuC type 1 subfamily. As to quaternary structure, heterodimer of LeuC and LeuD. Requires [4Fe-4S] cluster as cofactor.

The enzyme catalyses (2R,3S)-3-isopropylmalate = (2S)-2-isopropylmalate. The protein operates within amino-acid biosynthesis; L-leucine biosynthesis; L-leucine from 3-methyl-2-oxobutanoate: step 2/4. Functionally, catalyzes the isomerization between 2-isopropylmalate and 3-isopropylmalate, via the formation of 2-isopropylmaleate. This chain is 3-isopropylmalate dehydratase large subunit, found in Lysinibacillus sphaericus (strain C3-41).